Consider the following 256-residue polypeptide: Large ribosomal subunit protein bL28m (256 aa).

A mitochondrion-targeting transit peptide spans 1–55 (MPLHKVPVGLWKRLRLREGIYSRLPAHYLRSLEEARTPTPVHFRPHGAKFKINPK).

Belongs to the bacterial ribosomal protein bL28 family. Component of the mitochondrial ribosome large subunit (39S) which comprises a 16S rRNA and about 50 distinct proteins. Interacts with OXA1L.

Its subcellular location is the mitochondrion. This is Large ribosomal subunit protein bL28m (MRPL28) from Bos taurus (Bovine).